The chain runs to 371 residues: MVGNCQSVPMIGVATGAAIAGAWSDRHRQPPTFPALVCVLGFTETALIPGISAAGQTPSDRQITALADGEFLLRGIQPQYHYALPPLTAGASPALISRALIEALALPLYVFDAGLPLPRLPEMIDLGGTPARCLTTGQAMTPQMVAHLWEQGWSWGAKLSSQYPWLIIAECVVGGTTTALALCESLGIPARDCVGSSHRQSNHTQKWSLVQKGLAHLPPQADPFTCVAAIGDPMQVVVAAMALRASQTCGVLLAGGSQMIAVYAFGRAIAQWRQLPWRPEQIVVGTTRWLIEDQTAQIHRLAERVQCPLIYTQLDFSLSRHPALRAYEQGFVKEGVGAGGCAIAGHLLAGWRNSEMVDIVDRLADRWAKGM.

This sequence belongs to the UPF0284 family.

The sequence is that of UPF0284 protein tll2306 from Thermosynechococcus vestitus (strain NIES-2133 / IAM M-273 / BP-1).